The chain runs to 401 residues: Probable aspartate/prephenate aminotransferase (401 aa).

The L-aspartate site is built by Gly39, Trp125, and Asn175. Lys239 carries the N6-(pyridoxal phosphate)lysine modification. Arg375 serves as a coordination point for L-aspartate.

This sequence belongs to the class-I pyridoxal-phosphate-dependent aminotransferase family. As to quaternary structure, homodimer. Pyridoxal 5'-phosphate is required as a cofactor.

The protein resides in the cytoplasm. It catalyses the reaction L-aspartate + 2-oxoglutarate = oxaloacetate + L-glutamate. The enzyme catalyses L-arogenate + 2-oxoglutarate = prephenate + L-glutamate. Catalyzes the reversible conversion of aspartate and 2-oxoglutarate to glutamate and oxaloacetate. Can also transaminate prephenate in the presence of glutamate. The protein is Probable aspartate/prephenate aminotransferase (aatA) of Rickettsia conorii (strain ATCC VR-613 / Malish 7).